The chain runs to 1169 residues: Rabankyrin-5 (1169 aa).

The residue at position 2 (alanine 2) is an N-acetylalanine. One can recognise a BTB domain in the interval 68 to 130; that stretch reads SDLKIKVGDR…IYTDELEFRE (63 aa). ANK repeat units follow at residues 217 to 247, 255 to 284, 288 to 317, 322 to 362, and 366 to 396; these read KTEY…QLPG, NGDL…DVDM, SGWS…FVNA, AQET…NPNM, and KGRT…DLEL. Serine 270 bears the Phosphoserine mark. The short motif at 421–423 is the NPF element; sequence NPF. 16 ANK repeats span residues 490–519, 542–572, 588–617, 621–650, 654–683, 687–716, 724–753, 769–798, 802–832, 836–865, 870–899, 905–934, 938–967, 971–1001, 1005–1037, and 1043–1072; these read WGET…NPNL, HLQT…ALHA, RDQT…AIND, DGQT…DINV, DGET…DMSV, KGNP…DATC, CLQT…DVNS, DGQT…NVNA, EGRT…HLNV, QGLT…GAAE, KGRN…NVNS, SKLT…KVNE, HRQT…DFAA, NGNN…DAEA, RGQS…GYPL, and DGST…RLGV. The interaction with RHOD and RAB5A stretch occupies residues 650–759; sequence VRTQDGETAL…DVNSPRQPGA (110 aa). An FYVE-type zinc finger spans residues 1104-1164; that stretch reads WCDGSYCYEC…VCNICFDVLT (61 aa). Residues cysteine 1110, cysteine 1113, cysteine 1126, cysteine 1129, cysteine 1134, cysteine 1137, cysteine 1156, and cysteine 1159 each contribute to the Zn(2+) site.

As to quaternary structure, interacts with RAB5A (in GTP-bound form). Interacts with RHOD (independent of GTP-loaded status). Interacts with EHD1. Interacts with VPS26A; the interaction is independent of EHD1 and is indicative for an association with the cargo recognition subcomplex of the retromer complex. As to expression, high expression in whole adult brain and intermediate expression in all other tissues and specific brain regions examined, including fetal brain.

It localises to the cytoplasm. It is found in the endosome membrane. The protein resides in the early endosome. In terms of biological role, proposed effector of Rab5. Binds to phosphatidylinositol 3-phosphate (PI(3)P). Involved in homotypic early endosome fusion and to a lesser extent in heterotypic fusion of chlathrin-coated vesicles with early endosomes. Involved in macropinocytosis; the function is dependent on Rab5-GTP. Required for correct endosomal localization. Involved in the internalization and trafficking of activated tyrosine kinase receptors such as PDGFRB. Regulates the subcellular localization of the retromer complex in a EHD1-dependent manner. Involved in endosome-to-Golgi transport and biosynthetic transport to late endosomes and lysosomes indicative for a regulation of retromer complex-mediated retrograde transport. This is Rabankyrin-5 (ANKFY1) from Homo sapiens (Human).